The sequence spans 193 residues: MKLLIINNHDSFTFNLVDLIRKLNVPYDVLNVEDLKENTAENYSHILISPGPDIPRAYPQLFSMLEKYYQQKSILGVCLGHQTLCEFFGGTLYNLENVRHGQKRTLKVRSNSPLFFDLPTEFNIGLYHSWGVQEEDFPDCLEITALCDEDVVMAMQHKSLPIYSVQFHPESYMSDFGEKILRNWLAIPPTTNP.

Positions 2–193 (KLLIINNHDS…WLAIPPTTNP (192 aa)) constitute a Glutamine amidotransferase type-1 domain. Residues C78, H168, and E170 contribute to the active site.

As to quaternary structure, tetramer of two components I and two components II.

The enzyme catalyses chorismate + L-glutamine = anthranilate + pyruvate + L-glutamate + H(+). It functions in the pathway amino-acid biosynthesis; L-tryptophan biosynthesis; L-tryptophan from chorismate: step 1/5. The polypeptide is Putative anthranilate synthase component II (Haemophilus influenzae (strain ATCC 51907 / DSM 11121 / KW20 / Rd)).